We begin with the raw amino-acid sequence, 606 residues long: Glutamine--fructose-6-phosphate aminotransferase [isomerizing] (606 aa).

C2 functions as the Nucleophile; for GATase activity in the catalytic mechanism. Residues 2–218 (CGIFGYLGEK…SGELAVLRIG (217 aa)) form the Glutamine amidotransferase type-2 domain. SIS domains lie at 278 to 424 (FTES…HRQV) and 448 to 596 (LDSS…VDRP). K601 (for Fru-6P isomerization activity) is an active-site residue.

As to quaternary structure, homodimer.

Its subcellular location is the cytoplasm. The enzyme catalyses D-fructose 6-phosphate + L-glutamine = D-glucosamine 6-phosphate + L-glutamate. Its function is as follows. Catalyzes the first step in hexosamine metabolism, converting fructose-6P into glucosamine-6P using glutamine as a nitrogen source. The polypeptide is Glutamine--fructose-6-phosphate aminotransferase [isomerizing] (Chlamydia trachomatis serovar D (strain ATCC VR-885 / DSM 19411 / UW-3/Cx)).